A 599-amino-acid polypeptide reads, in one-letter code: Peptidyl-Asp metalloendopeptidase (599 aa).

Residues 1–20 form the signal peptide; sequence MKKSLLCSTLALAVASAAQA. His-164 lines the Zn(2+) pocket. The active site involves Glu-165. His-168 and His-174 together coordinate Zn(2+). The disordered stretch occupies residues 265-285; it reads PTKVPGTVNPGSGGDTPTPPD. The CBM-cenC domain occupies 458–583; the sequence is YDFESGIGGW…KRAELMILSG (126 aa).

The protein belongs to the peptidase M72 family. In terms of assembly, interacts with BamI, the product of its coregulated adjacent gene, which inhibits its protease activity. Zn(2+) serves as cofactor. Post-translationally, made as a membrane-associated pre-pro-protein, which is exported to the periplasm with removal of the signal peptide, leading to a protein with a molecular mass of 65 kDa, that likely contains the metzincin domain plus tandem carbohydrate-binding domains. Undergoes processing during export to the extracellular milieu, probably by autocatalysis, yielding a (mature length) 25 kDa protein that most likely corresponds to the metzincin domain only.

The protein resides in the secreted. It catalyses the reaction Cleavage of Xaa-|-Asp, Xaa-|-Glu and Xaa-|-cysteic acid bonds.. With respect to regulation, is inhibited by BamI, the product of its coregulated adjacent gene. Functionally, metalloprotease with endopeptidase activity. Specifically cleaves on the N-terminal side of aspartyl, glutamyl and cysteic acid residues. Mep72 appears to be a secreted biofilm-specific regulator that affects the processing of a very specific subset of virulence factors exported by the type III secretion machinery as well as flagellar proteins. Binds directly to ExoS and PcrV and affects the processing of these proteins in the biofilm secretome, but contrary to expectation, Mep72 seems to protect these targets against proteolytic processing/degradation. The protein is Peptidyl-Asp metalloendopeptidase of Pseudomonas aeruginosa (strain ATCC 15692 / DSM 22644 / CIP 104116 / JCM 14847 / LMG 12228 / 1C / PRS 101 / PAO1).